The chain runs to 326 residues: 4-hydroxythreonine-4-phosphate dehydrogenase (326 aa).

The substrate site is built by H134 and T135. The a divalent metal cation site is built by H164, H209, and H264. 3 residues coordinate substrate: K272, N281, and R290.

It belongs to the PdxA family. Homodimer. The cofactor is Zn(2+). It depends on Mg(2+) as a cofactor. Co(2+) serves as cofactor.

Its subcellular location is the cytoplasm. It catalyses the reaction 4-(phosphooxy)-L-threonine + NAD(+) = 3-amino-2-oxopropyl phosphate + CO2 + NADH. It participates in cofactor biosynthesis; pyridoxine 5'-phosphate biosynthesis; pyridoxine 5'-phosphate from D-erythrose 4-phosphate: step 4/5. Functionally, catalyzes the NAD(P)-dependent oxidation of 4-(phosphooxy)-L-threonine (HTP) into 2-amino-3-oxo-4-(phosphooxy)butyric acid which spontaneously decarboxylates to form 3-amino-2-oxopropyl phosphate (AHAP). The protein is 4-hydroxythreonine-4-phosphate dehydrogenase of Colwellia psychrerythraea (strain 34H / ATCC BAA-681) (Vibrio psychroerythus).